Here is a 266-residue protein sequence, read N- to C-terminus: Glucosamine-6-phosphate deaminase (266 aa).

Aspartate 72 acts as the Proton acceptor; for enolization step in catalysis. Aspartate 141 acts as the For ring-opening step in catalysis. Histidine 143 (proton acceptor; for ring-opening step) is an active-site residue. The active-site For ring-opening step is glutamate 148.

The protein belongs to the glucosamine/galactosamine-6-phosphate isomerase family. NagB subfamily. Homohexamer.

The catalysed reaction is alpha-D-glucosamine 6-phosphate + H2O = beta-D-fructose 6-phosphate + NH4(+). The protein operates within amino-sugar metabolism; N-acetylneuraminate degradation; D-fructose 6-phosphate from N-acetylneuraminate: step 5/5. Allosterically activated by N-acetylglucosamine 6-phosphate (GlcNAc6P). In terms of biological role, catalyzes the reversible isomerization-deamination of glucosamine 6-phosphate (GlcN6P) to form fructose 6-phosphate (Fru6P) and ammonium ion. The chain is Glucosamine-6-phosphate deaminase from Serratia proteamaculans (strain 568).